We begin with the raw amino-acid sequence, 239 residues long: Uridylate kinase (239 aa).

Position 12–15 (12–15) interacts with ATP; it reads KLSG. An involved in allosteric activation by GTP region spans residues 20–25; it reads GEKGFG. Gly54 lines the UMP pocket. The ATP site is built by Gly55 and Arg59. UMP contacts are provided by residues Asp72 and 133 to 140; that span reads TGNPFFST. ATP is bound by residues Tyr166 and Asp169.

This sequence belongs to the UMP kinase family. In terms of assembly, homohexamer.

The protein resides in the cytoplasm. The enzyme catalyses UMP + ATP = UDP + ADP. It participates in pyrimidine metabolism; CTP biosynthesis via de novo pathway; UDP from UMP (UMPK route): step 1/1. Its activity is regulated as follows. Allosterically activated by GTP. Inhibited by UTP. Catalyzes the reversible phosphorylation of UMP to UDP. In Caldicellulosiruptor saccharolyticus (strain ATCC 43494 / DSM 8903 / Tp8T 6331), this protein is Uridylate kinase.